A 151-amino-acid chain; its full sequence is Pseudo histidine-containing phosphotransfer protein 2 (151 aa).

Residues 38-133 enclose the HPt domain; it reads SPNFVEEVAA…ATLKQKLESY (96 aa).

In terms of biological role, functions as a two-component phosphorelay mediator between cytokinin sensor histidine kinases and response regulators (B-type ARRs). Plays an important role in propagating cytokinin signal transduction. The polypeptide is Pseudo histidine-containing phosphotransfer protein 2 (Oryza sativa subsp. japonica (Rice)).